The sequence spans 365 residues: Aminomethyltransferase (365 aa).

This sequence belongs to the GcvT family. The glycine cleavage system is composed of four proteins: P, T, L and H.

It carries out the reaction N(6)-[(R)-S(8)-aminomethyldihydrolipoyl]-L-lysyl-[protein] + (6S)-5,6,7,8-tetrahydrofolate = N(6)-[(R)-dihydrolipoyl]-L-lysyl-[protein] + (6R)-5,10-methylene-5,6,7,8-tetrahydrofolate + NH4(+). Its function is as follows. The glycine cleavage system catalyzes the degradation of glycine. This is Aminomethyltransferase from Parafrankia sp. (strain EAN1pec).